We begin with the raw amino-acid sequence, 334 residues long: Probable tRNA pseudouridine synthase B (334 aa).

The active-site Nucleophile is the aspartate 82. The region spanning 250 to 325 (LPKIWIKDSA…IAVDVEKVFM (76 aa)) is the PUA domain.

The protein belongs to the pseudouridine synthase TruB family. Type 2 subfamily.

It catalyses the reaction uridine(55) in tRNA = pseudouridine(55) in tRNA. Its function is as follows. Could be responsible for synthesis of pseudouridine from uracil-55 in the psi GC loop of transfer RNAs. This Pyrococcus abyssi (strain GE5 / Orsay) protein is Probable tRNA pseudouridine synthase B.